A 131-amino-acid polypeptide reads, in one-letter code: Heterochromatin silencing protein rss1 (131 aa).

As to quaternary structure, monomer.

It localises to the cytoplasm. The protein localises to the nucleus. In terms of biological role, required for heterochromatin silencing within pericentromeric repeats and at telomers. Facilitates the recruitment of Clr6 histone deacetylase (HDAC) by interacting with histones. Also interacts with Rad25, which mediates heterochromatin silencing in DNA repeats by recruiting the RITS complex. Together with Rad25, forms a regulatory hub that defines heterochromatin silencing within tandem repeats via linking RNAi and HDAC. In Schizosaccharomyces pombe (strain 972 / ATCC 24843) (Fission yeast), this protein is Heterochromatin silencing protein rss1 (rss1).